The following is a 175-amino-acid chain: Shikimate kinase (175 aa).

14-19 (GAGKST) contacts ATP. A Mg(2+)-binding site is contributed by Ser-18. Substrate is bound by residues Asp-36, Arg-60, and Gly-82. Arg-120 provides a ligand contact to ATP. Arg-140 serves as a coordination point for substrate. Gln-157 contacts ATP.

This sequence belongs to the shikimate kinase family. In terms of assembly, monomer. The cofactor is Mg(2+).

Its subcellular location is the cytoplasm. It catalyses the reaction shikimate + ATP = 3-phosphoshikimate + ADP + H(+). The protein operates within metabolic intermediate biosynthesis; chorismate biosynthesis; chorismate from D-erythrose 4-phosphate and phosphoenolpyruvate: step 5/7. Functionally, catalyzes the specific phosphorylation of the 3-hydroxyl group of shikimic acid using ATP as a cosubstrate. The sequence is that of Shikimate kinase from Mannheimia succiniciproducens (strain KCTC 0769BP / MBEL55E).